The sequence spans 63 residues: Cytochrome c oxidase subunit 7C, mitochondrial (63 aa).

Residues Met-1–Arg-16 constitute a mitochondrion transit peptide. Residues Ser-17 to Asn-33 lie on the Mitochondrial matrix side of the membrane. At Lys-25 the chain carries N6-acetyllysine; alternate. Lys-25 carries the N6-succinyllysine; alternate modification. Residues Lys-34–Leu-60 form a helical membrane-spanning segment. At Leu-61 to Lys-63 the chain is on the mitochondrial intermembrane side.

Belongs to the cytochrome c oxidase VIIc family. In terms of assembly, component of the cytochrome c oxidase (complex IV, CIV), a multisubunit enzyme composed of 14 subunits. The complex is composed of a catalytic core of 3 subunits MT-CO1, MT-CO2 and MT-CO3, encoded in the mitochondrial DNA, and 11 supernumerary subunits COX4I, COX5A, COX5B, COX6A, COX6B, COX6C, COX7A, COX7B, COX7C, COX8 and NDUFA4, which are encoded in the nuclear genome. The complex exists as a monomer or a dimer and forms supercomplexes (SCs) in the inner mitochondrial membrane with NADH-ubiquinone oxidoreductase (complex I, CI) and ubiquinol-cytochrome c oxidoreductase (cytochrome b-c1 complex, complex III, CIII), resulting in different assemblies (supercomplex SCI(1)III(2)IV(1) and megacomplex MCI(2)III(2)IV(2)). Interacts with RAB5IF.

The protein localises to the mitochondrion inner membrane. Its pathway is energy metabolism; oxidative phosphorylation. Functionally, component of the cytochrome c oxidase, the last enzyme in the mitochondrial electron transport chain which drives oxidative phosphorylation. The respiratory chain contains 3 multisubunit complexes succinate dehydrogenase (complex II, CII), ubiquinol-cytochrome c oxidoreductase (cytochrome b-c1 complex, complex III, CIII) and cytochrome c oxidase (complex IV, CIV), that cooperate to transfer electrons derived from NADH and succinate to molecular oxygen, creating an electrochemical gradient over the inner membrane that drives transmembrane transport and the ATP synthase. Cytochrome c oxidase is the component of the respiratory chain that catalyzes the reduction of oxygen to water. Electrons originating from reduced cytochrome c in the intermembrane space (IMS) are transferred via the dinuclear copper A center (CU(A)) of subunit 2 and heme A of subunit 1 to the active site in subunit 1, a binuclear center (BNC) formed by heme A3 and copper B (CU(B)). The BNC reduces molecular oxygen to 2 water molecules using 4 electrons from cytochrome c in the IMS and 4 protons from the mitochondrial matrix. The protein is Cytochrome c oxidase subunit 7C, mitochondrial (COX7C) of Carlito syrichta (Philippine tarsier).